Here is a 210-residue protein sequence, read N- to C-terminus: UPF0301 protein M446_6268 (210 aa).

It belongs to the UPF0301 (AlgH) family.

The sequence is that of UPF0301 protein M446_6268 from Methylobacterium sp. (strain 4-46).